The chain runs to 256 residues: Acetyl-coenzyme A carboxylase carboxyl transferase subunit alpha (256 aa).

Residues 1–236 (MTDVSRVLKE…KANLIEQITS (236 aa)) form the CoA carboxyltransferase C-terminal domain.

The protein belongs to the AccA family. Acetyl-CoA carboxylase is a heterohexamer composed of biotin carboxyl carrier protein (AccB), biotin carboxylase (AccC) and two subunits each of ACCase subunit alpha (AccA) and ACCase subunit beta (AccD).

Its subcellular location is the cytoplasm. The enzyme catalyses N(6)-carboxybiotinyl-L-lysyl-[protein] + acetyl-CoA = N(6)-biotinyl-L-lysyl-[protein] + malonyl-CoA. It participates in lipid metabolism; malonyl-CoA biosynthesis; malonyl-CoA from acetyl-CoA: step 1/1. In terms of biological role, component of the acetyl coenzyme A carboxylase (ACC) complex. First, biotin carboxylase catalyzes the carboxylation of biotin on its carrier protein (BCCP) and then the CO(2) group is transferred by the carboxyltransferase to acetyl-CoA to form malonyl-CoA. This Streptococcus pyogenes serotype M12 (strain MGAS2096) protein is Acetyl-coenzyme A carboxylase carboxyl transferase subunit alpha.